A 300-amino-acid polypeptide reads, in one-letter code: Geranylgeranyl pyrophosphate synthase (300 aa).

Position 1 is an N-acetylmethionine (Met-1). Isopentenyl diphosphate contacts are provided by Lys-25, Arg-28, and His-57. Residues Asp-64 and Asp-68 each coordinate Mg(2+). Residue Arg-73 coordinates dimethylallyl diphosphate. Arg-74 provides a ligand contact to isopentenyl diphosphate. The dimethylallyl diphosphate site is built by Lys-151, Thr-152, Gln-185, Lys-202, and Lys-212.

Belongs to the FPP/GGPP synthase family. As to quaternary structure, homohexamer; trimer of homodimers. The cofactor is Mg(2+).

It localises to the cytoplasm. It is found in the perinuclear region. Its subcellular location is the myofibril. The protein resides in the sarcomere. The protein localises to the z line. The catalysed reaction is isopentenyl diphosphate + dimethylallyl diphosphate = (2E)-geranyl diphosphate + diphosphate. The enzyme catalyses isopentenyl diphosphate + (2E)-geranyl diphosphate = (2E,6E)-farnesyl diphosphate + diphosphate. It catalyses the reaction isopentenyl diphosphate + (2E,6E)-farnesyl diphosphate = (2E,6E,10E)-geranylgeranyl diphosphate + diphosphate. It participates in isoprenoid biosynthesis; farnesyl diphosphate biosynthesis; farnesyl diphosphate from geranyl diphosphate and isopentenyl diphosphate: step 1/1. It functions in the pathway isoprenoid biosynthesis; geranyl diphosphate biosynthesis; geranyl diphosphate from dimethylallyl diphosphate and isopentenyl diphosphate: step 1/1. The protein operates within isoprenoid biosynthesis; geranylgeranyl diphosphate biosynthesis; geranylgeranyl diphosphate from farnesyl diphosphate and isopentenyl diphosphate: step 1/1. Its function is as follows. Catalyzes the trans-addition of the three molecules of IPP onto DMAPP to form geranylgeranyl pyrophosphate, an important precursor of carotenoids and geranylated proteins. In Bos taurus (Bovine), this protein is Geranylgeranyl pyrophosphate synthase (GGPS1).